We begin with the raw amino-acid sequence, 664 residues long: Lysophospholipase 1 (664 aa).

Residues 1–22 (MKLQSLLVSAAVLTSLTENVNA) form the signal peptide. N-linked (GlcNAc...) asparagine glycans are attached at residues Asn-26, Asn-33, Asn-52, Asn-78, Asn-92, Asn-123, Asn-160, Asn-170, Asn-215, Asn-277, Asn-307, Asn-345, Asn-388, Asn-459, Asn-489, Asn-513, Asn-541, Asn-565, and Asn-582. The region spanning 35-586 (TCDDDINLVR…TNYCWNGTID (552 aa)) is the PLA2c domain. Asn-634 is lipidated: GPI-anchor amidated asparagine. Positions 635-664 (AGNALVNYSNLNTNTFIGVLSVISAVFGLI) are cleaved as a propeptide — removed in mature form.

Belongs to the lysophospholipase family.

The protein localises to the cell membrane. It catalyses the reaction a 1-acyl-sn-glycero-3-phosphocholine + H2O = sn-glycerol 3-phosphocholine + a fatty acid + H(+). It carries out the reaction a 1-acyl-sn-glycero-3-phospho-(1D-myo-inositol) + H2O = sn-glycero-3-phospho-1D-myo-inositol + a fatty acid + H(+). The enzyme catalyses a 1-acyl-sn-glycero-3-phospho-L-serine + H2O = sn-glycero-3-phospho-L-serine + a fatty acid + H(+). The catalysed reaction is a 1,2-diacyl-sn-glycero-3-phospho-(1D-myo-inositol) + 2 H2O = sn-glycero-3-phospho-1D-myo-inositol + 2 a carboxylate + 2 H(+). It catalyses the reaction a 1,2-diacyl-sn-glycero-3-phospho-L-serine + 2 H2O = sn-glycero-3-phospho-L-serine + 2 a carboxylate + 2 H(+). It carries out the reaction 2 1-hexadecanoyl-sn-glycero-3-phosphocholine = 1,2-dihexadecanoyl-sn-glycero-3-phosphocholine + sn-glycerol 3-phosphocholine. The enzyme catalyses 1-hexadecanoyl-sn-glycero-3-phosphocholine + H2O = sn-glycerol 3-phosphocholine + hexadecanoate + H(+). The catalysed reaction is 1,2-dihexadecanoyl-sn-glycero-3-phosphocholine + H2O = 1-hexadecanoyl-sn-glycero-3-phosphocholine + hexadecanoate + H(+). Functionally, sequentially removes both fatty acyl groups from diacylglycerophospholipids and therefore has both phospholipase B and lysophospholipase activities. It also displays transacylase activity. Substrate preference is phosphatidylserine &gt; phosphatidylinositol &gt;&gt; phosphatidylcholine &gt; phosphatidylethanolamine. The substrate specificity is pH- and ion-dependent. In contrast with activities observed at optimum pH 3.5, the order of substrate preference at pH 5.5 is phosphatidylcholine = phosphatidylethanolamine &gt;&gt; phosphatidylinositol. Degrades predominantly phosphatidylcholine and to some extent phosphatidylinositol in vivo. This Saccharomyces cerevisiae (strain ATCC 204508 / S288c) (Baker's yeast) protein is Lysophospholipase 1.